The chain runs to 232 residues: Sugar fermentation stimulation protein homolog (232 aa).

It belongs to the SfsA family.

In Geobacter sulfurreducens (strain ATCC 51573 / DSM 12127 / PCA), this protein is Sugar fermentation stimulation protein homolog.